We begin with the raw amino-acid sequence, 1264 residues long: Phosphatidylinositol 3,4,5-trisphosphate 5-phosphatase 2 (1264 aa).

Residues 26 to 122 (WYHRDLSRAA…GLVCALLLPV (97 aa)) enclose the SH2 domain. Positions 124 to 137 (REREPDPPDDRDVS) are enriched in basic and acidic residues. The interval 124 to 182 (REREPDPPDDRDVSDGEDEKPPLPPRSGSTSISAPVGPGSPPAAPETPTTPAAESAPNG) is disordered. Position 137 is a phosphoserine (Ser137). Over residues 169–180 (ETPTTPAAESAP) the composition is skewed to low complexity. Thr170 is modified (phosphothreonine). 2 positions are modified to phosphoserine: Ser246 and Ser358. Tyr892 is subject to Phosphotyrosine. Residue Ser896 is modified to Phosphoserine. The segment at 903–1123 (GAKSKAPSVS…TFLGEVASGD (221 aa)) is disordered. Residues 944 to 954 (PPPTGRPPAPP) show a composition bias toward pro residues. Residues 950–955 (PPAPPR) carry the SH3-binding motif. A compositionally biased stretch (basic and acidic residues) spans 957–971 (ASREEPLTPRLKAEG). A Phosphothreonine modification is found at Thr964. The short motif at 989-992 (NPAY) is the NPXY motif element. Tyr992 carries the phosphotyrosine modification. Pro residues-rich tracts occupy residues 1002–1017 (LLPP…PVPP), 1054–1065 (LPPPDFPPPPLP), and 1093–1110 (GPPP…PGPS). Ser1137 carries the phosphoserine modification. The tract at residues 1140-1178 (DYAPAGPGRSVLLPGPLELQPPRGLPSDYGRPLSFPPPR) is disordered. Tyr1141 and Tyr1168 each carry phosphotyrosine. Positions 1210–1264 (WLRAIGLERYEEGLVHNGWDDLEFLSDITEEDLEEAGVQDPAHKRLLLDTLQLSK) constitute an SAM domain. Ser1263 is modified (phosphoserine).

The protein belongs to the inositol 1,4,5-trisphosphate 5-phosphatase family. As to quaternary structure, interacts with tyrosine phosphorylated form of SHC1. Interacts with EGFR. Upon stimulation by the EGF signaling pathway, it forms a complex with SHC1 and EGFR. Interacts with cytoskeletal protein SORBS3/vinexin, promoting its localization to the periphery of cells. Forms a complex with filamin (FLNA or FLNB), actin, GPIb (GP1BA or GP1BB) that regulates cortical and submembraneous actin. Interacts with c-Met/MET, when c-Met/MET is phosphorylated on 'Tyr-1356'. Interacts with p130Cas/BCAR1. Interacts with CENTD3/ARAP3 via its SAM domain. Interacts with c-Cbl/CBL and CAP/SORBS1. Interacts with activated EPHA2 receptor. Interacts with receptor FCGR2A. Interacts with receptor FCGR2B. Interacts with tyrosine kinase ABL1. Interacts with tyrosine kinase TEC. Interacts with CSF1R. Interacts (via N-terminus) with SH3YL1 (via SH3 domain). Interacts with FCRL6 (tyrosine phosphorylated form). Interacts (via SH2 domain) with tyrosine phosphorylated KLRC1 (via ITIM). Interacts with NEDD9/HEF1. Post-translationally, tyrosine phosphorylated by the members of the SRC family after exposure to a diverse array of extracellular stimuli such as insulin, growth factors such as EGF or PDGF, chemokines, integrin ligands and hypertonic and oxidative stress. May be phosphorylated upon IgG receptor FCGR2B-binding. Phosphorylated at Tyr-992 following cell attachment and spreading. Phosphorylated at Tyr-1168 following EGF signaling pathway stimulation. Phosphorylated at Thr-964 in response to PDGF.

It localises to the cytoplasm. The protein resides in the cytosol. The protein localises to the membrane. It is found in the cell projection. Its subcellular location is the filopodium. It localises to the lamellipodium. The protein resides in the basal cell membrane. The protein localises to the nucleus. It is found in the nucleus speckle. Its subcellular location is the cytoskeleton. It localises to the spindle pole. It catalyses the reaction a 1,2-diacyl-sn-glycero-3-phospho-(1D-myo-inositol-3,4,5-trisphosphate) + H2O = a 1,2-diacyl-sn-glycero-3-phospho-(1D-myo-inositol-3,4-bisphosphate) + phosphate. The catalysed reaction is 1,2-dioctanoyl-sn-glycero-3-phospho-(1D-myo-inositol-3,4,5-trisphosphate) + H2O = 1,2-dioctanoyl-sn-glycero-3-phospho-(1D-myo-inositol-3,4-bisphosphate) + phosphate. The enzyme catalyses 1,2-dihexadecanoyl-sn-glycero-3-phospho-(1D-myo-inositol-3,4,5-trisphosphate) + H2O = 1,2-dihexadecanoyl-sn-glycero-3-phospho-(1D-myo-inositol-3,4-bisphosphate) + phosphate. Its activity is regulated as follows. Activated upon translocation to the sites of synthesis of PtdIns(3,4,5)P3 in the membrane. Enzymatic activity is enhanced in the presence of phosphatidylserine. In terms of biological role, phosphatidylinositol (PtdIns) phosphatase that specifically hydrolyzes the 5-phosphate of phosphatidylinositol-3,4,5-trisphosphate (PtdIns(3,4,5)P3) to produce PtdIns(3,4)P2, thereby negatively regulating the PI3K (phosphoinositide 3-kinase) pathways. Required for correct mitotic spindle orientation and therefore progression of mitosis. Plays a central role in regulation of PI3K-dependent insulin signaling, although the precise molecular mechanisms and signaling pathways remain unclear. While overexpression reduces both insulin-stimulated MAP kinase and Akt activation, its absence does not affect insulin signaling or GLUT4 trafficking. Confers resistance to dietary obesity. May act by regulating AKT2, but not AKT1, phosphorylation at the plasma membrane. Part of a signaling pathway that regulates actin cytoskeleton remodeling. Required for the maintenance and dynamic remodeling of actin structures as well as in endocytosis, having a major impact on ligand-induced EGFR internalization and degradation. Participates in regulation of cortical and submembraneous actin by hydrolyzing PtdIns(3,4,5)P3 thereby regulating membrane ruffling. Regulates cell adhesion and cell spreading. Required for HGF-mediated lamellipodium formation, cell scattering and spreading. Acts as a negative regulator of EPHA2 receptor endocytosis by inhibiting via PI3K-dependent Rac1 activation. Acts as a regulator of neuritogenesis by regulating PtdIns(3,4,5)P3 level and is required to form an initial protrusive pattern, and later, maintain proper neurite outgrowth. Acts as a negative regulator of the FC-gamma-RIIA receptor (FCGR2A). Mediates signaling from the FC-gamma-RIIB receptor (FCGR2B), playing a central role in terminating signal transduction from activating immune/hematopoietic cell receptor systems. Involved in EGF signaling pathway. Upon stimulation by EGF, it is recruited by EGFR and dephosphorylates PtdIns(3,4,5)P3. Plays a negative role in regulating the PI3K-PKB pathway, possibly by inhibiting PKB activity. Down-regulates Fc-gamma-R-mediated phagocytosis in macrophages independently of INPP5D/SHIP1. In macrophages, down-regulates NF-kappa-B-dependent gene transcription by regulating macrophage colony-stimulating factor (M-CSF)-induced signaling. Plays a role in the localization of AURKA and NEDD9/HEF1 to the basolateral membrane at interphase in polarized cysts, thereby mediates cell cycle homeostasis, cell polarization and cilia assembly. Additionally promotion of cilia growth is also facilitated by hydrolysis of (PtdIns(3,4,5)P3) to PtdIns(3,4)P2. Promotes formation of apical membrane-initiation sites during the initial stages of lumen formation via Rho family-induced actin filament organization and CTNNB1 localization to cell-cell contacts. May also hydrolyze PtdIns(1,3,4,5)P4, and could thus affect the levels of the higher inositol polyphosphates like InsP6. Involved in endochondral ossification. This is Phosphatidylinositol 3,4,5-trisphosphate 5-phosphatase 2 from Canis lupus familiaris (Dog).